The primary structure comprises 341 residues: RNA 3'-terminal phosphate cyclase (341 aa).

ATP contacts are provided by residues Q102 and 283-287 (HLADQ). H308 acts as the Tele-AMP-histidine intermediate in catalysis.

It belongs to the RNA 3'-terminal cyclase family. Type 1 subfamily.

The protein localises to the cytoplasm. The enzyme catalyses a 3'-end 3'-phospho-ribonucleotide-RNA + ATP = a 3'-end 2',3'-cyclophospho-ribonucleotide-RNA + AMP + diphosphate. Its function is as follows. Catalyzes the conversion of 3'-phosphate to a 2',3'-cyclic phosphodiester at the end of RNA. The mechanism of action of the enzyme occurs in 3 steps: (A) adenylation of the enzyme by ATP; (B) transfer of adenylate to an RNA-N3'P to produce RNA-N3'PP5'A; (C) and attack of the adjacent 2'-hydroxyl on the 3'-phosphorus in the diester linkage to produce the cyclic end product. The biological role of this enzyme is unknown but it is likely to function in some aspects of cellular RNA processing. This is RNA 3'-terminal phosphate cyclase from Pseudomonas aeruginosa (strain LESB58).